Reading from the N-terminus, the 513-residue chain is ATP synthase subunit alpha (513 aa).

Residue 169–176 (GDRQTGKT) participates in ATP binding.

It belongs to the ATPase alpha/beta chains family. As to quaternary structure, F-type ATPases have 2 components, CF(1) - the catalytic core - and CF(0) - the membrane proton channel. CF(1) has five subunits: alpha(3), beta(3), gamma(1), delta(1), epsilon(1). CF(0) has three main subunits: a(1), b(2) and c(9-12). The alpha and beta chains form an alternating ring which encloses part of the gamma chain. CF(1) is attached to CF(0) by a central stalk formed by the gamma and epsilon chains, while a peripheral stalk is formed by the delta and b chains.

It is found in the cell inner membrane. The catalysed reaction is ATP + H2O + 4 H(+)(in) = ADP + phosphate + 5 H(+)(out). In terms of biological role, produces ATP from ADP in the presence of a proton gradient across the membrane. The alpha chain is a regulatory subunit. In Edwardsiella ictaluri (strain 93-146), this protein is ATP synthase subunit alpha.